A 373-amino-acid chain; its full sequence is Thyroid hormone receptor beta (373 aa).

The segment at 1–18 (MPSSMSGYIPSYLDKDEL) is modulating. C19, C22, C36, C39, C57, C63, C73, and C76 together coordinate Zn(2+). NR C4-type zinc fingers lie at residues 19-39 (CVVCGDKATGYHYRCITCEGC) and 57-81 (CKYEGKCVIDKVTRNQCQECRFKKC). Positions 19-93 (CVVCGDKATG…VGMATDLVLD (75 aa)) form a DNA-binding region, nuclear receptor. Residues 129 to 373 (EEWELIQVVT…PPLFLEVFED (245 aa)) enclose the NR LBD domain. The 3,3',5-triiodo-L-thyronine site is built by R194, N243, and H347. R194, N243, and H347 together coordinate L-thyroxine.

This sequence belongs to the nuclear hormone receptor family. NR1 subfamily.

The protein localises to the nucleus. In terms of biological role, nuclear hormone receptor that can act as a repressor or activator of transcription. High affinity receptor for thyroid hormones, including triiodothyronine and thyroxine. The protein is Thyroid hormone receptor beta (thrb) of Aquarana catesbeiana (American bullfrog).